The sequence spans 38 residues: Large ribosomal subunit protein bL36 (38 aa).

It belongs to the bacterial ribosomal protein bL36 family.

The chain is Large ribosomal subunit protein bL36 from Cellvibrio japonicus (strain Ueda107) (Pseudomonas fluorescens subsp. cellulosa).